A 250-amino-acid chain; its full sequence is uncharacterized protein (250 aa).

The disordered stretch occupies residues 182-205; that stretch reads HTPIVSIQTPPPPAPTPNRPDVPA. Pro residues predominate over residues 190 to 201; sequence TPPPPAPTPNRP. Residues 230–250 form a helical membrane-spanning segment; sequence TRISVIPLLSVLLLVIIIILL.

It belongs to the ascovirus HvAV ORF18 family.

It localises to the membrane. This is an uncharacterized protein from Spodoptera frugiperda ascovirus 1a (SfAV-1a).